Reading from the N-terminus, the 117-residue chain is MIAMPVRMQQGSEGDGGGPSRGTSVITRTKPKTKKPSLYRVLLLNDDYTPMEFVIHILERFFQKNREEATVIMLHVHNHGVGECGVFTYEVAETKVTQVMDFARQHQHPLQCVMEKK.

The interval Met1–Thr33 is disordered.

This sequence belongs to the ClpS family. As to quaternary structure, binds to the N-terminal domain of the chaperone ClpA.

In terms of biological role, involved in the modulation of the specificity of the ClpAP-mediated ATP-dependent protein degradation. In Rhizobium meliloti (strain 1021) (Ensifer meliloti), this protein is ATP-dependent Clp protease adapter protein ClpS 1.